Consider the following 494-residue polypeptide: Cytochrome P450 monooxygenase acrF (494 aa).

Residue cysteine 420 coordinates heme.

This sequence belongs to the cytochrome P450 family. Heme is required as a cofactor.

It participates in secondary metabolite biosynthesis. Cytochrome P450 monooxygenase; part of the cluster that mediates the biosynthesis of acurin A, a highly reduced polyketide coupled to a serine via a peptide bond. The activities of the highly reducing polyketide synthase acrA and the nonribosomal peptide synthetase acrB are collectively responsible for the synthesis of the acurin A core structure with a heptaketide backbone produced by acrA covalently fused to a L-serine by acrB. After the formation of the PK-NRP hybrid product, it is detached from acrB by reductive release to set up the formation of the lactam ring by aldol condensation. The hydrolyase acrC then catalyzes water loss to generate a double bond in the ring. This double bond is probably reduced, which is followed by three oxidations at C-22 to generate the carboxylic acid moiety, involving probably the FAD-binding monooxygenase acrE and the cytochrome P450 monooxygenases acrD and acrF. Finally, a last methylation step performed by the O-methyltransferase acrG leads to the production of acurin A. The protein is Cytochrome P450 monooxygenase acrF of Aspergillus aculeatus (strain ATCC 16872 / CBS 172.66 / WB 5094).